Reading from the N-terminus, the 267-residue chain is tRNA-cytidine(32) 2-sulfurtransferase 1 (267 aa).

A PP-loop motif motif is present at residues 42–47 (SGGKDS). Residues cysteine 117, cysteine 120, and cysteine 208 each coordinate [4Fe-4S] cluster.

This sequence belongs to the TtcA family. As to quaternary structure, homodimer. Requires Mg(2+) as cofactor. It depends on [4Fe-4S] cluster as a cofactor.

The protein resides in the cytoplasm. The enzyme catalyses cytidine(32) in tRNA + S-sulfanyl-L-cysteinyl-[cysteine desulfurase] + AH2 + ATP = 2-thiocytidine(32) in tRNA + L-cysteinyl-[cysteine desulfurase] + A + AMP + diphosphate + H(+). It participates in tRNA modification. Functionally, catalyzes the ATP-dependent 2-thiolation of cytidine in position 32 of tRNA, to form 2-thiocytidine (s(2)C32). The sulfur atoms are provided by the cysteine/cysteine desulfurase (IscS) system. This is tRNA-cytidine(32) 2-sulfurtransferase 1 from Francisella tularensis subsp. novicida (strain U112).